The chain runs to 123 residues: Nitrogen regulatory protein GlnK2 (123 aa).

ATP is bound by residues 38-40 and Ser-49; that span reads SLT. Ser-49 lines the ADP pocket. O-UMP-tyrosine is present on Tyr-62. ATP-binding positions include Val-75, 98 to 101, and Arg-114; that span reads GDGK. 98–101 is an ADP binding site; sequence GDGK. 98–101 contacts AMP; that stretch reads GDGK.

This sequence belongs to the P(II) protein family. Homotrimer. Interacts with the glutamine synthetase 3 (GS3) in the presence of 2-oxoglutarate. Interacts in vitro with Amt1 after ammonium shock. May also interact with Amt2. Post-translationally, uridylylated on Tyr-62.

It is found in the cytoplasm. Its activity is regulated as follows. Binds the effectors ADP and ATP. Also binds AMP with high affinity, raising the possibility that AMP could be an important PII effector, at least in archaea. The change in the ATP/AMP ratio may be more relevant for describing the energy status in the cells than the ATP/ADP ratio alone. Involved in the regulation of nitrogen metabolism. Regulates the activity of its targets by protein-protein interaction in response to the nitrogen status of the cell. Increases the activity of the glutamine synthetase 3 in the presence of 2-oxoglutarate. May regulate the activity of the ammonia channel Amt2 via direct interaction. The chain is Nitrogen regulatory protein GlnK2 from Haloferax mediterranei (strain ATCC 33500 / DSM 1411 / JCM 8866 / NBRC 14739 / NCIMB 2177 / R-4) (Halobacterium mediterranei).